The chain runs to 734 residues: Photosystem I P700 chlorophyll a apoprotein A2 (734 aa).

8 helical membrane passes run 46 to 69, 135 to 158, 175 to 199, 273 to 291, 330 to 353, 369 to 395, 417 to 439, and 517 to 535; these read IFAS…FHVA, LYTG…LHLQ, LNHH…HVAI, IAHH…GHMY, IHFQ…QHMY, AALY…IFFI, AIIS…LYVH, and FLVH…LILV. Cys559 and Cys568 together coordinate [4Fe-4S] cluster. A run of 2 helical transmembrane segments spans residues 575 to 596 and 643 to 665; these read AFYL…YWHW and LSVW…MFLI. Chlorophyll a is bound by residues His654, Met662, and Tyr670. Trp671 contacts phylloquinone. The helical transmembrane segment at 707–727 threads the bilayer; sequence LVGLAHFSVGYIFTYAAFLIA.

This sequence belongs to the PsaA/PsaB family. The PsaA/B heterodimer binds the P700 chlorophyll special pair and subsequent electron acceptors. PSI consists of a core antenna complex that captures photons, and an electron transfer chain that converts photonic excitation into a charge separation. The eukaryotic PSI reaction center is composed of at least 11 subunits. It depends on P700 is a chlorophyll a/chlorophyll a' dimer, A0 is one or more chlorophyll a, A1 is one or both phylloquinones and FX is a shared 4Fe-4S iron-sulfur center. as a cofactor.

Its subcellular location is the plastid. It is found in the chloroplast thylakoid membrane. The enzyme catalyses reduced [plastocyanin] + hnu + oxidized [2Fe-2S]-[ferredoxin] = oxidized [plastocyanin] + reduced [2Fe-2S]-[ferredoxin]. Functionally, psaA and PsaB bind P700, the primary electron donor of photosystem I (PSI), as well as the electron acceptors A0, A1 and FX. PSI is a plastocyanin-ferredoxin oxidoreductase, converting photonic excitation into a charge separation, which transfers an electron from the donor P700 chlorophyll pair to the spectroscopically characterized acceptors A0, A1, FX, FA and FB in turn. Oxidized P700 is reduced on the lumenal side of the thylakoid membrane by plastocyanin. The polypeptide is Photosystem I P700 chlorophyll a apoprotein A2 (Vitis vinifera (Grape)).